Consider the following 141-residue polypeptide: MLMPKRTKFRKMMKGRNRGMAHRGNSLAYGDFGIKAVEHGRIDSRQIEASRIAMTRKVKRQAKVWIMVFPDKPLTAKPLETRMGKGKGSVDKWVMNIKPGRICFEMAGVGEELAREALALAMHKLPFKTKIVTRDSENELY.

The protein belongs to the universal ribosomal protein uL16 family. As to quaternary structure, part of the 50S ribosomal subunit.

Binds 23S rRNA and is also seen to make contacts with the A and possibly P site tRNAs. The protein is Large ribosomal subunit protein uL16 of Aliarcobacter butzleri (strain RM4018) (Arcobacter butzleri).